A 305-amino-acid chain; its full sequence is D-alanine--D-alanine ligase (305 aa).

The region spanning 107-299 is the ATP-grasp domain; that stretch reads KVIFASAGLK…FGELVLRILQ (193 aa). 134-185 is a binding site for ATP; the sequence is PLPVVVKPSREGSSVGVGIVRDPSRMQAALDEAFRYDSEILIEGFIDGREVQ. Residues aspartate 253, glutamate 266, and asparagine 268 each contribute to the Mg(2+) site.

The protein belongs to the D-alanine--D-alanine ligase family. Mg(2+) is required as a cofactor. Mn(2+) serves as cofactor.

The protein localises to the cytoplasm. It catalyses the reaction 2 D-alanine + ATP = D-alanyl-D-alanine + ADP + phosphate + H(+). Its pathway is cell wall biogenesis; peptidoglycan biosynthesis. Its function is as follows. Cell wall formation. The chain is D-alanine--D-alanine ligase from Citrifermentans bemidjiense (strain ATCC BAA-1014 / DSM 16622 / JCM 12645 / Bem) (Geobacter bemidjiensis).